A 960-amino-acid chain; its full sequence is Dynamin-like GTPase OPA1, mitochondrial (960 aa).

The N-terminal 87 residues, 1–87 (MWRAGRAAVA…IKYGYQPRRN (87 aa)), are a transit peptide targeting the mitochondrion. Over 88-96 (FWPARLAAR) the chain is Mitochondrial matrix. Residues 97–113 (LLKLRYIILGSAVGGGY) traverse the membrane as a helical segment. Residues 114–770 (TAKKTFDEWK…NAIENMIGPD (657 aa)) lie on the Mitochondrial intermembrane side of the membrane. A coiled-coil region spans residues 210 to 254 (SDKEKIDQLQEELLHTQLKYQRILERLEKENKELRKLVLQKDDKG). An LQQQIQ motif motif is present at residues 217–222 (QLQEEL). N6-acetyllysine is present on lysine 228. The Dynamin-type G domain maps to 285–561 (QDHLPRVVVV…FWKMVRESVE (277 aa)). A G1 motif region spans residues 295-302 (GDQSAGKT). The GTP site is built by serine 298, glycine 300, lysine 301, threonine 302, serine 303, and glycine 317. Threonine 302 provides a ligand contact to Mg(2+). The G2 motif stretch occupies residues 321–324 (MMTR). Mg(2+)-binding residues include threonine 323 and aspartate 398. Residues 398-401 (DLPG) are G3 motif. Residues 467-470 (TKVD) form a G4 motif region. Positions 468, 470, and 503 each coordinate GTP. Residues 501 to 504 (VVTG) form a G5 motif region. 2 stalk region regions span residues 589–836 (DRNE…IKDT) and 874–928 (CNDV…VKLL). The segment at 736 to 856 (SDKQQWDAAI…KTALNHCNLC (121 aa)) is paddle region. Residues 771–781 (WKKRWMYWKNR) lie within the membrane without spanning it. At 782-960 (TQEQCVHNET…AFIEALHQEK (179 aa)) the chain is on the mitochondrial intermembrane side. Cysteine 856 and cysteine 874 are oxidised to a cystine. A coiled-coil region spans residues 895 to 960 (RQQLTNTEVR…AFIEALHQEK (66 aa)).

Belongs to the TRAFAC class dynamin-like GTPase superfamily. Dynamin/Fzo/YdjA family. In terms of assembly, oligomeric complex consisting of membrane-bound and soluble forms of OPA1. Interacts with RCC1L; RCC1L acts as a guanine nucleotide exchange factor (GEF) for OPA1 by exchanging bound GDP for free GTP. Interacts with CHCHD3 and IMMT; these interactions occur preferentially with soluble OPA1 forms. Interacts with PRELID1. Post-translationally, cleaved by OMA1 or YME1L downstream of the transmembrane region in response to different signals to generate soluble forms. Cleaved by OMA1 at position S1 following stress conditions, generating the short soluble form (Dynamin-like GTPase OPA1, short form; S-OPA1). AFG3L2 is involved in the regulation of OMA1-dependent processing of OPA1. PARL-dependent proteolytic processing releases an antiapoptotic soluble form not required for mitochondrial fusion. Cleavage at position S2 by YME1L is required to mediate oxidative phosphorylation (OXPHOS)-induced mitochondrial fusion. Cleavage occurs in the sequence motif Leu-Gln-Gln-Gln-Ile-Gln (LQQQIQ). In terms of processing, cleavage at position S3 by YME1L is required for membrane tubulation. Detected in brain (at protein level). Detected in brain, brain stem, heart, kidney, liver and skeletal muscle.

Its subcellular location is the mitochondrion inner membrane. It is found in the mitochondrion intermembrane space. The catalysed reaction is GTP + H2O = GDP + phosphate + H(+). Activated by guanine nucleotide exchange factor RCC1L. Functionally, dynamin-related GTPase that is essential for normal mitochondrial morphology by mediating fusion of the mitochondrial inner membranes, regulating cristae morphology and maintaining respiratory chain function. Exists in two forms: the transmembrane, long form (Dynamin-like GTPase OPA1, long form; L-OPA1), which is tethered to the inner mitochondrial membrane, and the short soluble form (Dynamin-like GTPase OPA1, short form; S-OPA1), which results from proteolytic cleavage and localizes in the intermembrane space. Both forms (L-OPA1 and S-OPA1) cooperate to catalyze the fusion of the mitochondrial inner membrane. The equilibrium between L-OPA1 and S-OPA1 is essential: excess levels of S-OPA1, produced by cleavage by OMA1 following loss of mitochondrial membrane potential, lead to an impaired equilibrium between L-OPA1 and S-OPA1, inhibiting mitochondrial fusion. The balance between L-OPA1 and S-OPA1 also influences cristae shape and morphology. Involved in remodeling cristae and the release of cytochrome c during apoptosis. Proteolytic processing by PARL in response to intrinsic apoptotic signals may lead to disassembly of OPA1 oligomers and release of the caspase activator cytochrome C (CYCS) into the mitochondrial intermembrane space. Acts as a regulator of T-helper Th17 cells, which are characterized by cells with fused mitochondria with tight cristae, by mediating mitochondrial membrane remodeling: OPA1 is required for interleukin-17 (IL-17) production. Its role in mitochondrial morphology is required for mitochondrial genome maintenance. Constitutes the transmembrane long form (L-OPA1) that plays a central role in mitochondrial inner membrane fusion and cristae morphology. L-OPA1 and the soluble short form (S-OPA1) form higher-order helical assemblies that coordinate the fusion of mitochondrial inner membranes. Inner membrane-anchored L-OPA1 molecules initiate membrane remodeling by recruiting soluble S-OPA1 to rapidly polymerize into a flexible cylindrical scaffold encaging the mitochondrial inner membrane. Once at the membrane surface, the formation of S-OPA1 helices induce bilayer curvature. OPA1 dimerization through the paddle region, which inserts into cardiolipin-containing membrane, promotes GTP hydrolysis and the helical assembly of a flexible OPA1 lattice on the membrane, which drives membrane curvature and mitochondrial fusion. Plays a role in the maintenance and remodeling of mitochondrial cristae, some invaginations of the mitochondrial inner membrane that provide an increase in the surface area. Probably acts by forming helical filaments at the inside of inner membrane tubes with the shape and dimensions of crista junctions. The equilibrium between L-OPA1 and S-OPA1 influences cristae shape and morphology: increased L-OPA1 levels promote cristae stacking and elongated mitochondria, while increased S-OPA1 levels correlated with irregular cristae packing and round mitochondria shape. Its function is as follows. Constitutes the soluble short form (S-OPA1) generated by cleavage by OMA1, which plays a central role in mitochondrial inner membrane fusion and cristae morphology. The transmembrane long form (L-OPA1) and the S-OPA1 form higher-order helical assemblies that coordinate the fusion of mitochondrial inner membranes. Inner membrane-anchored L-OPA1 molecules initiate membrane remodeling by recruiting soluble S-OPA1 to rapidly polymerize into a flexible cylindrical scaffold encaging the mitochondrial inner membrane. Once at the membrane surface, the formation of S-OPA1 helices induce bilayer curvature. OPA1 dimerization through the paddle region, which inserts into cardiolipin-containing membrane, promotes GTP hydrolysis and the helical assembly of a flexible OPA1 lattice on the membrane, which drives membrane curvature and mitochondrial fusion. Excess levels of S-OPA1 produced by cleavage by OMA1 following stress conditions that induce loss of mitochondrial membrane potential, lead to an impaired equilibrium between L-OPA1 and S-OPA1, thereby inhibiting mitochondrial fusion. Involved in mitochondrial safeguard in response to transient mitochondrial membrane depolarization by mediating flickering: cleavage by OMA1 leads to excess production of S-OPA1, preventing mitochondrial hyperfusion. Plays a role in the maintenance and remodeling of mitochondrial cristae, some invaginations of the mitochondrial inner membrane that provide an increase in the surface area. Probably acts by forming helical filaments at the inside of inner membrane tubes with the shape and dimensions of crista junctions. The equilibrium between L-OPA1 and S-OPA1 influences cristae shape and morphology: increased L-OPA1 levels promote cristae stacking and elongated mitochondria, while increased S-OPA1 levels correlated with irregular cristae packing and round mitochondria shape. In terms of biological role, isoforms that contain the alternative exon 4b are required for mitochondrial genome maintenance, possibly by anchoring the mitochondrial nucleoids to the inner mitochondrial membrane. The protein is Dynamin-like GTPase OPA1, mitochondrial of Mus musculus (Mouse).